Reading from the N-terminus, the 137-residue chain is Peptide methionine sulfoxide reductase MsrB (137 aa).

The MsrB domain occupies 7-129; that stretch reads AEELKKNLSE…NSASLRFTDG (123 aa). Zn(2+)-binding residues include C46, C49, C95, and C98. Residue C118 is the Nucleophile of the active site.

It belongs to the MsrB Met sulfoxide reductase family. It depends on Zn(2+) as a cofactor.

It catalyses the reaction L-methionyl-[protein] + [thioredoxin]-disulfide + H2O = L-methionyl-(R)-S-oxide-[protein] + [thioredoxin]-dithiol. The protein is Peptide methionine sulfoxide reductase MsrB of Escherichia coli (strain K12 / MC4100 / BW2952).